The sequence spans 1608 residues: Protein REDUCED CHLOROPLAST COVERAGE 3 (1608 aa).

A compositionally biased stretch (basic residues) spans 1-12; the sequence is MAPRSSKGKSNN. Disordered stretches follow at residues 1–22 and 278–303; these read MAPR…KKKR and VSES…GRNG. Residues 288-564 form the Clu domain; the sequence is EDEHWGGNGG…KKETDVCGKP (277 aa). TPR repeat units follow at residues 848–881, 890–923, 932–965, and 974–1007; these read GRTL…MIAV, ACAY…NERE, MKSY…LHFT, and AATY…NKRL. 5 disordered regions span residues 1194–1226, 1238–1292, 1369–1400, 1466–1499, and 1531–1552; these read VEES…RQPD, HNRN…ASGA, KQES…KTSD, TPRS…VSVD, and PAAL…KDSA. Residues 1217–1224 carry the Nuclear localization signal motif; the sequence is GRKSRQRQ. 2 stretches are compositionally biased toward polar residues: residues 1242–1265 and 1373–1385; these read QDVQ…LSKS and QESA…LTSE. The span at 1535–1546 shows a compositional bias: polar residues; it reads SKTSPEAESGGT.

Its subcellular location is the nucleus. It localises to the cytoplasm. It is found in the cytosol. Its function is as follows. May act as the scaffold of a protein complex, which sequesters key factors that are required for the G2 to M transition in meristematic tissues. Together with REC2, REC3 and FMT/CLU, contributes to the establishment of the cellular volume devoted to the chloroplast compartment. The sequence is that of Protein REDUCED CHLOROPLAST COVERAGE 3 from Arabidopsis thaliana (Mouse-ear cress).